Consider the following 230-residue polypeptide: DNA ADP-ribosyl transferase (230 aa).

The DarT domain occupies 26–230 (WIVWHFTHAD…KYVIKPGMYY (205 aa)). NAD(+)-binding positions include 30 to 32 (HFT), Gly-39, Leu-47, and Arg-67. The active-site Proton acceptor is the Arg-67. Glu-183 is a catalytic residue.

Belongs to the DarT ADP-ribosyltransferase family. Interacts with cognate antitoxin DarG (via C-terminus); this heterodimeric complex neutralizes the toxic effect of DarT by preventing ssDNA binding to DarT and consequently inactivating the toxin by direct protein-protein interactions.

The catalysed reaction is a thymidine in DNA + NAD(+) = an N-(ADP-alpha-D-ribosyl)-thymidine in DNA + nicotinamide + H(+). Its function is as follows. Toxic component of the hybrid type II/IV toxin-antitoxin (TA) system DarTG, which plays a crucial role in controlling bacterial growth and bacteriophage infection. ADP-ribosylates ssDNA, preferentially in the motif TTTW. In case of phage infection, DarT toxin ADP-ribosylates DNA, which inhibits both viral DNA and RNA synthesis and leads to abortive infection. Its toxic effect is neutralized by cognate antitoxin DarG. This is DNA ADP-ribosyl transferase from Mycobacterium bovis (strain BCG / Pasteur 1173P2).